Here is a 310-residue protein sequence, read N- to C-terminus: Protoheme IX farnesyltransferase (310 aa).

The next 9 membrane-spanning stretches (helical) occupy residues 21–43, 48–70, 95–115, 118–138, 147–167, 174–194, 220–240, 243–263, and 289–309; these read LLKPRVMSLVVFTALVGLLVAPV, MIALTGILFIALGAGASGALNMW, GEALGIGLALSGIAVVMLGLA, LFAAGLLAFTIFFYAVVYSMW, IVIGGAAGAFPPMIGWAVATG, LFMFALIFMWTPPHFWSLALF, VLVYSLLLAPLAVAGAFTGIG, LYLATALALNGWLLVGAVRIW, and LFLHFGAILAEAALKPYGLGG.

Belongs to the UbiA prenyltransferase family. Protoheme IX farnesyltransferase subfamily. In terms of assembly, interacts with CtaA.

The protein resides in the cell inner membrane. The catalysed reaction is heme b + (2E,6E)-farnesyl diphosphate + H2O = Fe(II)-heme o + diphosphate. It functions in the pathway porphyrin-containing compound metabolism; heme O biosynthesis; heme O from protoheme: step 1/1. In terms of biological role, converts heme B (protoheme IX) to heme O by substitution of the vinyl group on carbon 2 of heme B porphyrin ring with a hydroxyethyl farnesyl side group. The sequence is that of Protoheme IX farnesyltransferase from Cereibacter sphaeroides (strain KD131 / KCTC 12085) (Rhodobacter sphaeroides).